The sequence spans 404 residues: Probable tRNA sulfurtransferase (404 aa).

One can recognise a THUMP domain in the interval E61–E166. ATP contacts are provided by residues L184–L185, H209–F210, R266, G288, and Q297.

The protein belongs to the ThiI family.

The protein localises to the cytoplasm. It carries out the reaction [ThiI sulfur-carrier protein]-S-sulfanyl-L-cysteine + a uridine in tRNA + 2 reduced [2Fe-2S]-[ferredoxin] + ATP + H(+) = [ThiI sulfur-carrier protein]-L-cysteine + a 4-thiouridine in tRNA + 2 oxidized [2Fe-2S]-[ferredoxin] + AMP + diphosphate. It catalyses the reaction [ThiS sulfur-carrier protein]-C-terminal Gly-Gly-AMP + S-sulfanyl-L-cysteinyl-[cysteine desulfurase] + AH2 = [ThiS sulfur-carrier protein]-C-terminal-Gly-aminoethanethioate + L-cysteinyl-[cysteine desulfurase] + A + AMP + 2 H(+). It participates in cofactor biosynthesis; thiamine diphosphate biosynthesis. In terms of biological role, catalyzes the ATP-dependent transfer of a sulfur to tRNA to produce 4-thiouridine in position 8 of tRNAs, which functions as a near-UV photosensor. Also catalyzes the transfer of sulfur to the sulfur carrier protein ThiS, forming ThiS-thiocarboxylate. This is a step in the synthesis of thiazole, in the thiamine biosynthesis pathway. The sulfur is donated as persulfide by IscS. This is Probable tRNA sulfurtransferase from Bacillus cereus (strain AH187).